Here is a 562-residue protein sequence, read N- to C-terminus: Adenylate kinase isoenzyme 5 (562 aa).

Adenylate kinase regions lie at residues 133–316 and 377–559; these read KIIL…VAVD and KIIF…TAID. An ATP-binding site is contributed by 142–147; sequence GSGKGT. Residues 162-193 form an NMP 1 region; the sequence is SVGELLRKKIHSASSNRKWSLIAKIITNGELA. Residues R168, 191-193, 219-222, and Q226 each bind AMP; these read ELA and GFPR. The LID 1 stretch occupies residues 256 to 266; sequence KRAEQQGRPDD. R257 is an ATP binding site. AMP is bound by residues R263 and R274. An ATP-binding site is contributed by 386 to 391; sequence GSGKGT. An NMP 2 region spans residues 406–435; that stretch reads STGELLRQELTSESERSKLIRDIMERGDLV. Residues T407, R412, 433-435, 462-465, and Q469 each bind AMP; these read DLV and GYPR. Residues 499 to 509 are LID 2; the sequence is QRSQSSQRGED. R500 serves as a coordination point for ATP. The AMP site is built by R506 and R517. An ATP-binding site is contributed by G545.

This sequence belongs to the adenylate kinase family. In terms of assembly, monomer. Interacts with YWHAZ. Brain specific.

The protein localises to the cytoplasm. The enzyme catalyses AMP + ATP = 2 ADP. It carries out the reaction a 2'-deoxyribonucleoside 5'-diphosphate + ATP = a 2'-deoxyribonucleoside 5'-triphosphate + ADP. The catalysed reaction is a ribonucleoside 5'-diphosphate + ATP = a ribonucleoside 5'-triphosphate + ADP. Nucleoside monophosphate (NMP) kinase that catalyzes the reversible transfer of the terminal phosphate group between nucleoside triphosphates and monophosphates. Active on AMP and dAMP with ATP as a donor. When GTP is used as phosphate donor, the enzyme phosphorylates AMP, CMP, and to a small extent dCMP. Also displays broad nucleoside diphosphate kinase activity. This Mus musculus (Mouse) protein is Adenylate kinase isoenzyme 5 (Ak5).